The primary structure comprises 776 residues: Protein STRUBBELIG-RECEPTOR FAMILY 3 (776 aa).

Residues 1–29 (MAAKRSIYCLLLLPLLLSLLIWIPSISLA) form the signal peptide. Residues 30-35 (ATNPDD) lie on the Cytoplasmic side of the membrane. Residues 36-56 (VAAINGLFAALGAPVLPGWIA) form a helical membrane-spanning segment. Over 57–316 (SGGDPCGEAW…KGKNSSHTKK (260 aa)) the chain is Extracellular. Asparagine 72 carries an N-linked (GlcNAc...) asparagine glycan. LRR repeat units follow at residues 99 to 120 (SIRG…TLPV), 121 to 143 (TLQH…LGTL), 145 to 167 (FLND…FQNL), 169 to 191 (GLIN…MENL), 193 to 215 (TLTT…QGLP), and 216 to 236 (LQDL…KLLS). Residue asparagine 179 is glycosylated (N-linked (GlcNAc...) asparagine). Residues asparagine 248 and asparagine 253 are each glycosylated (N-linked (GlcNAc...) asparagine). The segment at 251–311 (MINSTSTAPS…SSENSKGKNS (61 aa)) is disordered. A compositionally biased stretch (low complexity) spans 254-268 (STSTAPSLSPSLSPT). Positions 269–284 (KPAPTRPFSGVPPPPN) are enriched in pro residues. Residues 298 to 309 (SEGSSSENSKGK) are compositionally biased toward low complexity. Residue asparagine 310 is glycosylated (N-linked (GlcNAc...) asparagine). The chain crosses the membrane as a helical span at residues 317-337 (IILIAFAGVLVFIILVLAILL). Over 338–776 (LLPKCARRRE…RHGSGDSTAD (439 aa)) the chain is Cytoplasmic. Residues 355–440 (PHQVGADRGS…PPPPPPPPPP (86 aa)) form a disordered region. A compositionally biased stretch (basic and acidic residues) spans 381-407 (RSEKVQREPFKKAGEEPKVLHDLERLR). Pro residues predominate over residues 426-440 (MPPPPPPPPPPPPPP). In terms of domain architecture, Protein kinase spans 485-763 (FAQENLIGSG…EVVQDLLDMI (279 aa)). ATP is bound by residues 491–499 (IGSGMLGSV) and lysine 513.

Belongs to the protein kinase superfamily. Ser/Thr protein kinase family. In terms of tissue distribution, expressed in seedlings, roots, stems, leaves, flowers and siliques.

Its subcellular location is the membrane. Functionally, not essential for epidermal patterning and not redundant with STRUBBELIG. The chain is Protein STRUBBELIG-RECEPTOR FAMILY 3 (SRF3) from Arabidopsis thaliana (Mouse-ear cress).